We begin with the raw amino-acid sequence, 820 residues long: Ribosome biogenesis protein ERB1 (820 aa).

The segment at 1–111 is disordered; sequence MVRSRSNSVK…SDAGDDEVDP (111 aa). Basic and acidic residues predominate over residues 9–19; that stretch reads VKKDLKRKVDE. The span at 20–48 shows a compositional bias: acidic residues; it reads PVDVQDEFDVEGLIDEGDSDDEDEAEQEV. Basic and acidic residues predominate over residues 53-64; it reads VTKDKKNTSKTE. Positions 65–110 are enriched in acidic residues; sequence NEEDADDESDSDAELEALIGEEEDLSGSELEDELAYFSDAGDDEVD. A required for interaction with NOP7 region spans residues 282 to 395; that stretch reads RFIPSKHEAK…LRHVPGYSES (114 aa). Residues 395-431 are required for interaction with YTM1; it reads SVRERFERSLDLYLAPRVRKNKLNIDPDSLIPDLPSP. WD repeat units lie at residues 447 to 486 and 495 to 535; these read GHKG…ELYR and AQDD…FDIE. The interval 545-585 is disordered; sequence GWGFAEGGREQQDIDTKGLDDDADSDSDDETGHVKKKSPPA. Basic and acidic residues predominate over residues 551 to 564; it reads GGREQQDIDTKGLD. 5 WD repeats span residues 604–646, 649–687, 690–729, 733–773, and 789–820; these read TATK…SQSP, KSKG…MAKK, PGAR…KPYK, YHEK…DMMT, and KSGL…LWTT.

The protein belongs to the WD repeat BOP1/ERB1 family. As to quaternary structure, component of the NOP7 complex, composed of ERB1, NOP7 and YTM1. The complex is held together by ERB1, which interacts with NOP7 via its N-terminal domain and with YTM1 via a high-affinity interaction between the seven-bladed beta-propeller domains of the 2 proteins. The NOP7 complex associates with the 66S pre-ribosome.

The protein resides in the nucleus. The protein localises to the nucleolus. It localises to the nucleoplasm. In terms of biological role, component of the NOP7 complex, which is required for maturation of the 25S and 5.8S ribosomal RNAs and formation of the 60S ribosome. This is Ribosome biogenesis protein ERB1 from Yarrowia lipolytica (strain CLIB 122 / E 150) (Yeast).